The primary structure comprises 132 residues: DNA-directed RNA polymerase subunit omega (132 aa).

Residues 100-119 form a disordered region; sequence VSAEEEASHGTAGMSAEELE.

It belongs to the RNA polymerase subunit omega family. As to quaternary structure, the RNAP catalytic core consists of 2 alpha, 1 beta, 1 beta' and 1 omega subunit. When a sigma factor is associated with the core the holoenzyme is formed, which can initiate transcription.

It catalyses the reaction RNA(n) + a ribonucleoside 5'-triphosphate = RNA(n+1) + diphosphate. In terms of biological role, promotes RNA polymerase assembly. Latches the N- and C-terminal regions of the beta' subunit thereby facilitating its interaction with the beta and alpha subunits. In Gluconacetobacter diazotrophicus (strain ATCC 49037 / DSM 5601 / CCUG 37298 / CIP 103539 / LMG 7603 / PAl5), this protein is DNA-directed RNA polymerase subunit omega.